The primary structure comprises 89 residues: MAHKKSGGSSSNGRDSESKRLGVKKFGGEKVLAGNILVRQRGTKFYPGSGVGIGKDHTLFALVQGAVGFVTKKHNRTYVTVTPAAQPAE.

A disordered region spans residues 1–21; the sequence is MAHKKSGGSSSNGRDSESKRL.

The protein belongs to the bacterial ribosomal protein bL27 family.

The sequence is that of Large ribosomal subunit protein bL27 from Caulobacter vibrioides (strain NA1000 / CB15N) (Caulobacter crescentus).